Here is a 345-residue protein sequence, read N- to C-terminus: Holliday junction branch migration complex subunit RuvB (345 aa).

The tract at residues 1-22 is disordered; sequence MIETDALSGGTPRRLVTQQPLS. The large ATPase domain (RuvB-L) stretch occupies residues 4–193; it reads TDALSGGTPR…FGIVARLEFY (190 aa). Residues L32, R33, G74, K77, T78, T79, 140–142, R183, Y193, and R230 each bind ATP; that span reads EDY. T78 lines the Mg(2+) pocket. The small ATPAse domain (RuvB-S) stretch occupies residues 194-264; sequence TPEELTRIVR…VADAALSMLD (71 aa). The interval 267–345 is head domain (RuvB-H); it reads PAGLDVMDRK…HFGFVPPERV (79 aa). 2 residues coordinate DNA: R322 and R327.

Belongs to the RuvB family. As to quaternary structure, homohexamer. Forms an RuvA(8)-RuvB(12)-Holliday junction (HJ) complex. HJ DNA is sandwiched between 2 RuvA tetramers; dsDNA enters through RuvA and exits via RuvB. An RuvB hexamer assembles on each DNA strand where it exits the tetramer. Each RuvB hexamer is contacted by two RuvA subunits (via domain III) on 2 adjacent RuvB subunits; this complex drives branch migration. In the full resolvosome a probable DNA-RuvA(4)-RuvB(12)-RuvC(2) complex forms which resolves the HJ.

It localises to the cytoplasm. The catalysed reaction is ATP + H2O = ADP + phosphate + H(+). The RuvA-RuvB-RuvC complex processes Holliday junction (HJ) DNA during genetic recombination and DNA repair, while the RuvA-RuvB complex plays an important role in the rescue of blocked DNA replication forks via replication fork reversal (RFR). RuvA specifically binds to HJ cruciform DNA, conferring on it an open structure. The RuvB hexamer acts as an ATP-dependent pump, pulling dsDNA into and through the RuvAB complex. RuvB forms 2 homohexamers on either side of HJ DNA bound by 1 or 2 RuvA tetramers; 4 subunits per hexamer contact DNA at a time. Coordinated motions by a converter formed by DNA-disengaged RuvB subunits stimulates ATP hydrolysis and nucleotide exchange. Immobilization of the converter enables RuvB to convert the ATP-contained energy into a lever motion, pulling 2 nucleotides of DNA out of the RuvA tetramer per ATP hydrolyzed, thus driving DNA branch migration. The RuvB motors rotate together with the DNA substrate, which together with the progressing nucleotide cycle form the mechanistic basis for DNA recombination by continuous HJ branch migration. Branch migration allows RuvC to scan DNA until it finds its consensus sequence, where it cleaves and resolves cruciform DNA. The protein is Holliday junction branch migration complex subunit RuvB of Laribacter hongkongensis (strain HLHK9).